The primary structure comprises 332 residues: Ketol-acid reductoisomerase (NADP(+)) (332 aa).

Positions 3 to 183 (TEIFYDADAD…GGARAGVIKT (181 aa)) constitute a KARI N-terminal Rossmann domain. NADP(+) is bound by residues 26 to 29 (YGSQ), S52, S54, and 84 to 87 (DTKQ). The active site involves H109. Position 135 (G135) interacts with NADP(+). A KARI C-terminal knotted domain is found at 184–329 (TFTEETETDL…KKLRSLMSWT (146 aa)). Residues D192, E196, E228, and E232 each contribute to the Mg(2+) site. A substrate-binding site is contributed by S253.

It belongs to the ketol-acid reductoisomerase family. Requires Mg(2+) as cofactor.

It carries out the reaction (2R)-2,3-dihydroxy-3-methylbutanoate + NADP(+) = (2S)-2-acetolactate + NADPH + H(+). The catalysed reaction is (2R,3R)-2,3-dihydroxy-3-methylpentanoate + NADP(+) = (S)-2-ethyl-2-hydroxy-3-oxobutanoate + NADPH + H(+). Its pathway is amino-acid biosynthesis; L-isoleucine biosynthesis; L-isoleucine from 2-oxobutanoate: step 2/4. The protein operates within amino-acid biosynthesis; L-valine biosynthesis; L-valine from pyruvate: step 2/4. Its function is as follows. Involved in the biosynthesis of branched-chain amino acids (BCAA). Catalyzes an alkyl-migration followed by a ketol-acid reduction of (S)-2-acetolactate (S2AL) to yield (R)-2,3-dihydroxy-isovalerate. In the isomerase reaction, S2AL is rearranged via a Mg-dependent methyl migration to produce 3-hydroxy-3-methyl-2-ketobutyrate (HMKB). In the reductase reaction, this 2-ketoacid undergoes a metal-dependent reduction by NADPH to yield (R)-2,3-dihydroxy-isovalerate. This chain is Ketol-acid reductoisomerase (NADP(+)), found in Saccharopolyspora erythraea (strain ATCC 11635 / DSM 40517 / JCM 4748 / NBRC 13426 / NCIMB 8594 / NRRL 2338).